A 503-amino-acid chain; its full sequence is Probable cytochrome P450 6a19 (503 aa).

Cysteine 445 contacts heme.

This sequence belongs to the cytochrome P450 family. Heme is required as a cofactor.

The protein localises to the endoplasmic reticulum membrane. It localises to the microsome membrane. Its function is as follows. May be involved in the metabolism of insect hormones and in the breakdown of synthetic insecticides. In Drosophila melanogaster (Fruit fly), this protein is Probable cytochrome P450 6a19 (Cyp6a19).